The sequence spans 261 residues: Probable membrane transporter protein XF_0764 (261 aa).

Helical transmembrane passes span 6 to 26 (LIVT…LGGG), 29 to 49 (ILAT…IAIG), 78 to 98 (VIFA…GMLI), 99 to 119 (DGQR…LLML), 150 to 170 (AASG…LIFA), 175 to 195 (TINA…ITTL), 205 to 225 (WTIA…GTLL), and 239 to 259 (VFGL…WASL).

It belongs to the 4-toluene sulfonate uptake permease (TSUP) (TC 2.A.102) family.

The protein resides in the cell membrane. This is Probable membrane transporter protein XF_0764 from Xylella fastidiosa (strain 9a5c).